The primary structure comprises 195 residues: Peptide methionine sulfoxide reductase MsrA 2 (195 aa).

Residue Cys18 is part of the active site.

The protein belongs to the MsrA Met sulfoxide reductase family.

The enzyme catalyses L-methionyl-[protein] + [thioredoxin]-disulfide + H2O = L-methionyl-(S)-S-oxide-[protein] + [thioredoxin]-dithiol. It carries out the reaction [thioredoxin]-disulfide + L-methionine + H2O = L-methionine (S)-S-oxide + [thioredoxin]-dithiol. In terms of biological role, has an important function as a repair enzyme for proteins that have been inactivated by oxidation. Catalyzes the reversible oxidation-reduction of methionine sulfoxide in proteins to methionine. This is Peptide methionine sulfoxide reductase MsrA 2 (msrA2) from Mesorhizobium japonicum (strain LMG 29417 / CECT 9101 / MAFF 303099) (Mesorhizobium loti (strain MAFF 303099)).